Here is a 225-residue protein sequence, read N- to C-terminus: Ribonuclease 3 (225 aa).

One can recognise an RNase III domain in the interval 5–127 (IEKLTRQLGY…IIGAVYLDSD (123 aa)). Glu40 is a binding site for Mg(2+). The active site involves Asp44. Asp113 and Glu116 together coordinate Mg(2+). Glu116 is a catalytic residue. One can recognise a DRBM domain in the interval 154 to 224 (DPKTRLQEFL…AELALEQLTN (71 aa)).

This sequence belongs to the ribonuclease III family. Homodimer. Mg(2+) is required as a cofactor.

It localises to the cytoplasm. It carries out the reaction Endonucleolytic cleavage to 5'-phosphomonoester.. In terms of biological role, digests double-stranded RNA. Involved in the processing of primary rRNA transcript to yield the immediate precursors to the large and small rRNAs (23S and 16S). Processes some mRNAs, and tRNAs when they are encoded in the rRNA operon. Processes pre-crRNA and tracrRNA of type II CRISPR loci if present in the organism. This chain is Ribonuclease 3, found in Vibrio vulnificus (strain YJ016).